The chain runs to 378 residues: Flagellin E (378 aa).

Coiled coils occupy residues 98–139 (QSAN…KLLN) and 311–339 (MQNR…IKDA).

Belongs to the bacterial flagellin family. Heteromer of multiple flagellin subunits including FlaA, FlaB, FlaC, FlaD and FlaE.

The protein resides in the secreted. Its subcellular location is the bacterial flagellum. In terms of biological role, flagellin is the subunit protein which polymerizes to form the filaments of bacterial flagella. FlaE is not essential for flagellar synthesis and motility. This Vibrio cholerae serotype O1 (strain ATCC 39541 / Classical Ogawa 395 / O395) protein is Flagellin E (flaE).